A 692-amino-acid polypeptide reads, in one-letter code: Follicle-stimulating hormone receptor (692 aa).

Positions 1–17 (MALLLVSLLAFLGTGSG) are cleaved as a signal peptide. 2 disulfide bridges follow: Cys18/Cys25 and Cys23/Cys32. One can recognise an LRRNT domain in the interval 18–46 (CHHWLCHCSNRVFLCQDSKVTEIPTDLPR). The Extracellular portion of the chain corresponds to 18-365 (CHHWLCHCSN…EDIMGYNILR (348 aa)). 9 LRR repeats span residues 49 to 72 (IELR…FGDL), 73 to 97 (EKIE…LPKL), 98 to 118 (HEIR…AFQN), 119 to 143 (LPSL…KIQS), 144 to 169 (LQKV…MGLS), 170 to 192 (FESV…AFNG), 193 to 216 (TQLD…VFQG), 217 to 240 (ASGP…GLEN), and 241 to 259 (LKKL…PNLD). N-linked (GlcNAc...) asparagine glycans are attached at residues Asn191 and Asn199. 4 disulfides stabilise this stretch: Cys275–Cys345, Cys276–Cys292, Cys276–Cys355, and Cys292–Cys337. Asn293 carries an N-linked (GlcNAc...) asparagine glycan. A Sulfotyrosine modification is found at Tyr334. A helical membrane pass occupies residues 366 to 386 (VLIWFISILAITGNTTVLVVL). The Cytoplasmic segment spans residues 387-397 (TTSQYKLTVPR). Residues 398 to 420 (FLMCNLAFADLCIGIYLLLIASV) traverse the membrane as a helical segment. The Extracellular segment spans residues 421 to 442 (DIHTKSQYHNYAIDWQTGAGCD). An intrachain disulfide couples Cys441 to Cys516. Residues 443–464 (AAGFFTVFASELSVYTLTAITL) form a helical membrane-spanning segment. The Cytoplasmic segment spans residues 465 to 484 (ERWHTITHAMQLECKVQLRH). A helical transmembrane segment spans residues 485–507 (AASVMVLGWTFAFAAALFPIFGI). Over 508–527 (SSYMKVSICLPMDIDSPLSQ) the chain is Extracellular. A helical transmembrane segment spans residues 528 to 549 (LYVMALLVLNVLAFVVICGCYT). At 550–572 (HIYLTVRNPTIVSSSSDTKIAKR) the chain is on the cytoplasmic side. Residues 573–596 (MATLIFTDFLCMAPISFFAISASL) form a helical membrane-spanning segment. Residues 597 to 607 (KVPLITVSKAK) are Extracellular-facing. A helical transmembrane segment spans residues 608–629 (ILLVLFYPINSCANPFLYAIFT). The Cytoplasmic segment spans residues 630-692 (KNFRRDFFIL…LVPLNHSSQN (63 aa)).

Belongs to the G-protein coupled receptor 1 family. FSH/LSH/TSH subfamily. Homotrimer. Functions as a homotrimer binding the FSH hormone heterodimer composed of CGA and FSHB. Interacts with ARRB2. Interacts with APPL2; interaction is independent of follicle stimulating hormone stimulation. In terms of processing, N-glycosylated; indirectly required for FSH-binding, possibly via a conformational change that allows high affinity binding of hormone. Post-translationally, sulfated. Sertoli cells and ovarian granulosa cells.

It is found in the cell membrane. Functionally, g protein-coupled receptor for follitropin, the follicle-stimulating hormone. Through cAMP production activates the downstream PI3K-AKT and ERK1/ERK2 signaling pathways. In Rattus norvegicus (Rat), this protein is Follicle-stimulating hormone receptor (Fshr).